A 360-amino-acid polypeptide reads, in one-letter code: Putative FBD-associated F-box protein At5g56430 (360 aa).

In terms of domain architecture, F-box spans Met1–Ala53. Kelch repeat units follow at residues Ile140–Asp186 and Val235–Glu285. Residues Lys276–Phe326 enclose the FBD domain.

This Arabidopsis thaliana (Mouse-ear cress) protein is Putative FBD-associated F-box protein At5g56430.